The sequence spans 720 residues: Polyribonucleotide nucleotidyltransferase (720 aa).

Mg(2+)-binding residues include Asp487 and Asp493. In terms of domain architecture, KH spans 554-613 (PRITTISIPKEKIREVIGTGGKVIREICEQTGAKIDIDDDGTIKVASVDADAAQRAIDWI). An S1 motif domain is found at 623 to 691 (GVIYNGKVVK…DRGKVKLSMK (69 aa)). Positions 695–720 (QTTGEDISAQLEAERAASKRERHHED) are disordered. Residues 706 to 720 (EAERAASKRERHHED) are compositionally biased toward basic and acidic residues.

It belongs to the polyribonucleotide nucleotidyltransferase family. The cofactor is Mg(2+).

Its subcellular location is the cytoplasm. It catalyses the reaction RNA(n+1) + phosphate = RNA(n) + a ribonucleoside 5'-diphosphate. Its function is as follows. Involved in mRNA degradation. Catalyzes the phosphorolysis of single-stranded polyribonucleotides processively in the 3'- to 5'-direction. This chain is Polyribonucleotide nucleotidyltransferase, found in Paramagnetospirillum magneticum (strain ATCC 700264 / AMB-1) (Magnetospirillum magneticum).